A 412-amino-acid chain; its full sequence is Double C2-like domain-containing protein beta (412 aa).

Residues 1-36 are negatively regulates targeting to plasma membrane; sequence MTLRRRGEKATISIQEHMAIDVCPGPIRPIKQISDY. Residues 1–90 form a mediates interaction with DYNLT1 region; sequence MTLRRRGEKA…EDVDQLFGAY (90 aa). A disordered region spans residues 38–123; sequence PRFPRGLPPT…PDVDGYESDD (86 aa). A compositionally biased stretch (pro residues) spans 43-58; the sequence is GLPPTAAPRAPAPPDA. The segment covering 59-74 has biased composition (low complexity); it reads PARSPAASASPRSPSD. Positions 95 to 108 are enriched in pro residues; the sequence is GPSPGPSPARPPAK. Residues 112–123 are compositionally biased toward acidic residues; sequence DEPDVDGYESDD. 2 consecutive C2 domains span residues 126-250 and 266-399; these read ALGT…SICL and ERGR…ERWH. Residues aspartate 157, aspartate 163, aspartate 218, aspartate 220, aspartate 297, aspartate 303, aspartate 357, aspartate 359, and aspartate 365 each coordinate Ca(2+). The segment at 257–375 is mediates interaction with STXBP3; the sequence is DKAEDKSLEE…FIGGVVLGIN (119 aa). Residue serine 411 is modified to Phosphoserine.

In terms of assembly, interacts with cytoplasmic dynein light chain DYNLT1. May interact with UNC13A; the interaction mediates targeting to the plasma membrane. Probably interacts with the SNARE (soluble N-ethylmaleimide-sensitive factor attached protein receptor) complex composed of SNAP25, STX1A and VAMP2; the interaction is calcium-dependent and competitive with SYT1. Interacts with STX4; the interaction is calcium-dependent, increased by insulin and glucose, and mediates vesicle fusion with plasma membrane in pancreatic cells and adipocytes. Interacts with STXBP3; the interaction is direct, occurs at the cell membrane and regulates glucose-stimulated insulin secretion. The cofactor is Ca(2+). As to expression, widely expressed. Expressed in pancreatic islet cells (at protein level).

It is found in the cytoplasm. It localises to the cytoplasmic granule. Its subcellular location is the cell membrane. In terms of biological role, calcium sensor which positively regulates SNARE-dependent fusion of vesicles with membranes. Binds phospholipids in a calcium-dependent manner and may act at the priming stage of fusion by modifying membrane curvature to stimulate fusion. Involved in calcium-triggered exocytosis in chromaffin cells and calcium-dependent spontaneous release of neurotransmitter in absence of action potentials in neuronal cells. Involved both in glucose-stimulated insulin secretion in pancreatic cells and insulin-dependent GLUT4 transport to the plasma membrane in adipocytes. The polypeptide is Double C2-like domain-containing protein beta (Doc2b) (Mus musculus (Mouse)).